Consider the following 121-residue polypeptide: Small ribosomal subunit protein bS6 (121 aa).

Belongs to the bacterial ribosomal protein bS6 family.

Functionally, binds together with bS18 to 16S ribosomal RNA. This is Small ribosomal subunit protein bS6 (rpsF) from Rickettsia prowazekii (strain Madrid E).